We begin with the raw amino-acid sequence, 896 residues long: Alanine--tRNA ligase (896 aa).

Zn(2+) is bound by residues His-581, His-585, Cys-684, and His-688.

The protein belongs to the class-II aminoacyl-tRNA synthetase family. Zn(2+) serves as cofactor.

It is found in the cytoplasm. It carries out the reaction tRNA(Ala) + L-alanine + ATP = L-alanyl-tRNA(Ala) + AMP + diphosphate. Functionally, catalyzes the attachment of alanine to tRNA(Ala) in a two-step reaction: alanine is first activated by ATP to form Ala-AMP and then transferred to the acceptor end of tRNA(Ala). Also edits incorrectly charged Ser-tRNA(Ala) and Gly-tRNA(Ala) via its editing domain. This Renibacterium salmoninarum (strain ATCC 33209 / DSM 20767 / JCM 11484 / NBRC 15589 / NCIMB 2235) protein is Alanine--tRNA ligase.